We begin with the raw amino-acid sequence, 252 residues long: 3-deoxy-manno-octulosonate cytidylyltransferase (252 aa).

This sequence belongs to the KdsB family.

Its subcellular location is the cytoplasm. The catalysed reaction is 3-deoxy-alpha-D-manno-oct-2-ulosonate + CTP = CMP-3-deoxy-beta-D-manno-octulosonate + diphosphate. It functions in the pathway nucleotide-sugar biosynthesis; CMP-3-deoxy-D-manno-octulosonate biosynthesis; CMP-3-deoxy-D-manno-octulosonate from 3-deoxy-D-manno-octulosonate and CTP: step 1/1. Its pathway is bacterial outer membrane biogenesis; lipopolysaccharide biosynthesis. Its function is as follows. Activates KDO (a required 8-carbon sugar) for incorporation into bacterial lipopolysaccharide in Gram-negative bacteria. The protein is 3-deoxy-manno-octulosonate cytidylyltransferase of Nitratidesulfovibrio vulgaris (strain ATCC 29579 / DSM 644 / CCUG 34227 / NCIMB 8303 / VKM B-1760 / Hildenborough) (Desulfovibrio vulgaris).